We begin with the raw amino-acid sequence, 1207 residues long: DNA-directed RNA polymerase subunit beta' (1207 aa).

Zn(2+) is bound by residues Cys-60, Cys-62, Cys-75, and Cys-78. Mg(2+) contacts are provided by Asp-449, Asp-451, and Asp-453. Residues Cys-822, Cys-896, Cys-903, and Cys-906 each contribute to the Zn(2+) site.

The protein belongs to the RNA polymerase beta' chain family. The RNAP catalytic core consists of 2 alpha, 1 beta, 1 beta' and 1 omega subunit. When a sigma factor is associated with the core the holoenzyme is formed, which can initiate transcription. Mg(2+) is required as a cofactor. The cofactor is Zn(2+).

The catalysed reaction is RNA(n) + a ribonucleoside 5'-triphosphate = RNA(n+1) + diphosphate. In terms of biological role, DNA-dependent RNA polymerase catalyzes the transcription of DNA into RNA using the four ribonucleoside triphosphates as substrates. This chain is DNA-directed RNA polymerase subunit beta', found in Staphylococcus aureus (strain MRSA252).